A 434-amino-acid chain; its full sequence is Neuropeptide receptor 22 (434 aa).

Residues 1 to 55 (MDEGGGIGSSLLSRITTTASEIMMRNEPTTTENPAVQEMNHIYHLTPSMKMLCIL) lie on the Extracellular side of the membrane. Residues 56–76 (FYSILCVCCVYGNVLVILVIV) form a helical membrane-spanning segment. Residues 77 to 86 (YFKRLRTATN) are Cytoplasmic-facing. The chain crosses the membrane as a helical span at residues 87-107 (ILILNLAVADLLISVFCIPFS). Topologically, residues 108–128 (YWQVLIYDDQRWLFGSMMCSL) are extracellular. An intrachain disulfide couples C126 to C204. The chain crosses the membrane as a helical span at residues 129–149 (LAFLQAMAVFLSAWTLVVISF). Residues 150 to 169 (DRWMAIMFLLTPNIRITRRR) are Cytoplasmic-facing. A helical membrane pass occupies residues 170–190 (ALYLVAATWIFSILMALPLLF). The Extracellular segment spans residues 191-226 (TTRFFEDQDGLPNCGENWTYFGDSGEQVRKVYSSMV). N207 carries an N-linked (GlcNAc...) asparagine glycan. The helical transmembrane segment at 227–247 (LILQYVVPQAVLIITYTHIGI) threads the bilayer. Residues 248–277 (KMWNSRVPGMQNGATKKMIVDRHESVKKLV) are Cytoplasmic-facing. Residues 278–298 (PMVILISALFALCWLPLLILI) traverse the membrane as a helical segment. Residues 299–310 (NVIPEFYPDINS) lie on the Extracellular side of the membrane. The helical transmembrane segment at 311–331 (WGYILYLWWFAHGLAMSHSMV) threads the bilayer. Residues 332–434 (NPIIYFIRNA…VRNNSANSLA (103 aa)) are Cytoplasmic-facing.

Belongs to the G-protein coupled receptor 1 family. In terms of tissue distribution, expressed in many cells, mainly in the head region, with expression detected in the head muscles, I2 neurons, MC neurons, RIH neuron, AIA neurons, AUA neurons, ASK neurons, ASI neurons, a few B-type motorneurons in the posterior ventral nerve cord, pharyngeal muscles, body wall muscles, the intestine and a few classes of unidentified cells anterior to the nerve ring. Expression in the MC neurons is important to mediate suppression of feeding while expression in the RIH neuron is important for the facilitation of egg-laying. No expression detected in other tissues including hypodermis.

Its subcellular location is the cell membrane. Receptor for the LURY-1-1 and LURY-1-2 peptides which control food-related processes including feeding, lifespan, egg-laying and roaming behavior. Receptor for flp-7 which stimulates serotonin-induced fat loss. Serotonin induces secretion of flp-7 from neurons and binding to npr-22 which leads to induction of the atgp-1 lipase and subsequent fat loss. Acts in vitro as a receptor for the flp-7 FMRFamide-like neuropeptides TPMQRSSMVRF-amide, SPMQRSSMVRF-amide, SPMERSAMVRF-amide and SPMDRSKMVRF-amide. Also acts in vitro as a receptor for a number of other FMRFamide-like neuropeptides including the flp-1 neuropeptide PNFMRY-amide, the flp-9 neuropeptide KPSFVRF-amide, the flp-11 neuropeptides AMRNALVRF-amide, ASGGMRNALVRF-amide and NGAPQPFVRF-amide, the flp-13 neuropeptides AADGAPLIRF-amide, ASPSAPLIRF-amide, SPSAVPLIRF-amide, SAAAPLIRF-amide and ASSAPLIRF-amide, and the flp-22 neuropeptide SPSAKWMRF-amide. The SPMERSAMVRF-amide neuropeptide from flp-7 acts as the strongest in vitro activator of npr-22. This chain is Neuropeptide receptor 22, found in Caenorhabditis elegans.